The following is a 369-amino-acid chain: Anhydro-N-acetylmuramic acid kinase (369 aa).

Residue 9–16 (GTSLDAVD) participates in ATP binding.

It belongs to the anhydro-N-acetylmuramic acid kinase family.

The enzyme catalyses 1,6-anhydro-N-acetyl-beta-muramate + ATP + H2O = N-acetyl-D-muramate 6-phosphate + ADP + H(+). Its pathway is amino-sugar metabolism; 1,6-anhydro-N-acetylmuramate degradation. It functions in the pathway cell wall biogenesis; peptidoglycan recycling. Its function is as follows. Catalyzes the specific phosphorylation of 1,6-anhydro-N-acetylmuramic acid (anhMurNAc) with the simultaneous cleavage of the 1,6-anhydro ring, generating MurNAc-6-P. Is required for the utilization of anhMurNAc either imported from the medium or derived from its own cell wall murein, and thus plays a role in cell wall recycling. The protein is Anhydro-N-acetylmuramic acid kinase of Phenylobacterium zucineum (strain HLK1).